The primary structure comprises 257 residues: MSGLRLDGKIAIITGGASGIGAEAVRLFTDHGAKVVIVDFQEELGQNVAVSVGKDKASFYRCDVTNEKEVENAVKFTVEKYGKLDVLFSNAGVMEQPGSFLDLNLEQFDRTMAVNVRGAAAFIKHAARAMVEKGTRGSIVCTTSVASEIGGPGPHAYTASKHALLGLVKSACGGLGKYGIRVNGVAPYAVATAINSRDEETVRMVEEYSAATGILKGVVLKARHVAEAALFLASDDSAYVSGQNLAVDGGYSVVKPI.

12 to 36 contributes to the NAD(+) binding site; that stretch reads IITGGASGIGAEAVRLFTDHGAKVV. A substrate-binding site is contributed by S144. Y157 (proton acceptor) is an active-site residue.

Belongs to the short-chain dehydrogenases/reductases (SDR) family. Highly expressed in the radicle tip, lateral root primordia and tips, and the area surrounding the cotyledon hydathode of young seedlings.

Confers resistance to the incompatible pathogenic bacteria P.syringae pv. tomato DC3000 in a PR1-dependent manner. Seems not involved in abscisic acid (ABA) biosynthesis. This Arabidopsis thaliana (Mouse-ear cress) protein is Short-chain dehydrogenase reductase 3a (SDR3a).